The primary structure comprises 437 residues: Adenylosuccinate synthetase (437 aa).

Residues 12 to 18 (GDEGKGK) and 40 to 42 (GHT) contribute to the GTP site. The Proton acceptor role is filled by D13. D13 and G40 together coordinate Mg(2+). Residues 13 to 16 (DEGK), 38 to 41 (NAGH), T128, R142, Q223, T238, and R302 contribute to the IMP site. H41 (proton donor) is an active-site residue. 298 to 304 (TTTGRRR) lines the substrate pocket. GTP is bound by residues R304, 330 to 332 (KLD), and 412 to 414 (SLG).

This sequence belongs to the adenylosuccinate synthetase family. As to quaternary structure, homodimer. Mg(2+) is required as a cofactor.

The protein localises to the cytoplasm. The catalysed reaction is IMP + L-aspartate + GTP = N(6)-(1,2-dicarboxyethyl)-AMP + GDP + phosphate + 2 H(+). It participates in purine metabolism; AMP biosynthesis via de novo pathway; AMP from IMP: step 1/2. In terms of biological role, plays an important role in the de novo pathway of purine nucleotide biosynthesis. Catalyzes the first committed step in the biosynthesis of AMP from IMP. The sequence is that of Adenylosuccinate synthetase from Prochlorococcus marinus (strain MIT 9211).